The sequence spans 368 residues: Glutaminyl-peptide cyclotransferase (368 aa).

Positions 1–23 (MARERRDSKAATFFCLAWALCLA) are cleaved as a signal peptide. 2 N-linked (GlcNAc...) asparagine glycosylation sites follow: Asn53 and Asn65. Cysteines 143 and 169 form a disulfide. Residue Asp164 coordinates Zn(2+). Glu207 serves as the catalytic Proton acceptor. Glu208 contributes to the Zn(2+) binding site. Residue Asp254 is the Proton acceptor of the active site. Asn292 is a glycosylation site (N-linked (GlcNAc...) asparagine). Position 336 (His336) interacts with Zn(2+). A glycan (N-linked (GlcNAc...) asparagine) is linked at Asn352.

The protein belongs to the glutaminyl-peptide cyclotransferase family. In terms of tissue distribution, expressed by the venom gland.

The protein localises to the secreted. The enzyme catalyses N-terminal L-glutaminyl-[peptide] = N-terminal 5-oxo-L-prolyl-[peptide] + NH4(+). Responsible for the biosynthesis of pyroglutamyl peptides. Has a bias against acidic and tryptophan residues adjacent to the N-terminal glutaminyl residue and a lack of importance of chain length after the second residue. Also catalyzes N-terminal pyroglutamate formation. The sequence is that of Glutaminyl-peptide cyclotransferase (QPCT) from Bothrops jararaca (Jararaca).